The primary structure comprises 1444 residues: RNA-directed RNA polymerase P1 (1444 aa).

Positions 156-182 are disordered; that stretch reads SEEIQMDESQSDKRRRKKRMEKSRPVW. A RdRp catalytic domain is found at 690–897; that stretch reads LGVGFATLYQ…KTVISHISGE (208 aa).

Belongs to the reoviridae RNA-directed RNA polymerase family.

It is found in the virion. The protein resides in the host cytoplasm. It carries out the reaction RNA(n) + a ribonucleoside 5'-triphosphate = RNA(n+1) + diphosphate. RNA-directed RNA polymerase that is involved in both transcription and genome replication. Together with the capping enzyme P5 and protein P7, forms an enzyme complex positioned near the channels situated at each of the five-fold vertices of the core. The sequence is that of RNA-directed RNA polymerase P1 (S1) from Rice dwarf virus (isolate Fujian) (RDV).